The primary structure comprises 655 residues: p-hydroxybenzoic acid efflux pump subunit AaeB (655 aa).

The next 10 membrane-spanning stretches (helical) occupy residues 13 to 33 (FAVK…HFQL), 38 to 58 (WAVL…GGEP), 69 to 89 (LRII…IAMI), 93 to 113 (LLMI…SSLV), 121 to 141 (WGLA…EPLL), 152 to 172 (EIVI…PRSI), 370 to 390 (LFWL…IAVV), 407 to 427 (FIYG…VIIP), 431 to 451 (QSML…GIEV), and 482 to 502 (FLDS…VILL).

The protein belongs to the aromatic acid exporter ArAE (TC 2.A.85) family.

Its subcellular location is the cell inner membrane. Functionally, forms an efflux pump with AaeA. Could function as a metabolic relief valve, allowing to eliminate certain compounds when they accumulate to high levels in the cell. The protein is p-hydroxybenzoic acid efflux pump subunit AaeB of Shigella dysenteriae serotype 1 (strain Sd197).